Consider the following 220-residue polypeptide: Probable metallo-hydrolase YybB (220 aa).

Residues histidine 67, histidine 69, aspartate 71, histidine 72, histidine 139, aspartate 158, and histidine 200 each contribute to the Zn(2+) site.

It belongs to the metallo-beta-lactamase superfamily. Zn(2+) serves as cofactor.

This Bacillus subtilis (strain 168) protein is Probable metallo-hydrolase YybB (yybB).